Here is a 547-residue protein sequence, read N- to C-terminus: Chaperonin GroEL 1 (547 aa).

Residues 30–33 (TLGP), K51, 87–91 (DGTTT), G415, and D496 each bind ATP. A disordered region spans residues 525–547 (KPEPKSPAGGPGMGGMGGMDGMM). Gly residues predominate over residues 533–547 (GGPGMGGMGGMDGMM).

This sequence belongs to the chaperonin (HSP60) family. Forms a cylinder of 14 subunits composed of two heptameric rings stacked back-to-back. Interacts with the co-chaperonin GroES.

It localises to the cytoplasm. It catalyses the reaction ATP + H2O + a folded polypeptide = ADP + phosphate + an unfolded polypeptide.. In terms of biological role, together with its co-chaperonin GroES, plays an essential role in assisting protein folding. The GroEL-GroES system forms a nano-cage that allows encapsulation of the non-native substrate proteins and provides a physical environment optimized to promote and accelerate protein folding. The chain is Chaperonin GroEL 1 from Cereibacter sphaeroides (strain ATCC 17023 / DSM 158 / JCM 6121 / CCUG 31486 / LMG 2827 / NBRC 12203 / NCIMB 8253 / ATH 2.4.1.) (Rhodobacter sphaeroides).